The following is a 530-amino-acid chain: Ankyrin repeat domain-containing protein 53 (530 aa).

The segment covering 1 to 15 (MASAGSTARRAGSGS) has biased composition (low complexity). The disordered stretch occupies residues 1 to 99 (MASAGSTARR…PSPSKESDQT (99 aa)). Residues 32 to 41 (PSGSMQQANK) are compositionally biased toward polar residues. ANK repeat units lie at residues 139–169 (KGFTAIHFAAQWGKLACLQVLVEEYKFPVDL), 173–206 (NSQTPLHLVIHRDNTTVALPCIYYLLEKGADLNA), and 210–239 (NGSTPLHLAARDGLLDCVKVLVQSGANVHA). Disordered stretches follow at residues 323 to 360 (GHSLVSNTKQARATALSKTPEQRESQRSRSFHPSVDAR) and 383 to 402 (PTMWNVSNNPARPPTTQISH). 2 stretches are compositionally biased toward polar residues: residues 326–341 (LVSNTKQARATALSKT) and 386–402 (WNVSNNPARPPTTQISH).

Interacts with PSRC1; recruited by PSRC1 to the spindle during mitosis. Phosphorylated during mitosis.

It is found in the cytoplasm. Its subcellular location is the cytoskeleton. The protein localises to the spindle. The protein resides in the spindle pole. Required for normal progression through mitosis. Involved in chromosome alignment and cytokinesis via regulation of microtubules polymerization. The sequence is that of Ankyrin repeat domain-containing protein 53 (ANKRD53) from Homo sapiens (Human).